A 360-amino-acid chain; its full sequence is Peptide chain release factor 1 (360 aa).

The residue at position 237 (glutamine 237) is an N5-methylglutamine.

It belongs to the prokaryotic/mitochondrial release factor family. Post-translationally, methylated by PrmC. Methylation increases the termination efficiency of RF1.

The protein resides in the cytoplasm. Peptide chain release factor 1 directs the termination of translation in response to the peptide chain termination codons UAG and UAA. In Saccharophagus degradans (strain 2-40 / ATCC 43961 / DSM 17024), this protein is Peptide chain release factor 1.